A 145-amino-acid chain; its full sequence is 3-hydroxyacyl-[acyl-carrier-protein] dehydratase FabZ (145 aa).

The active site involves His-49.

The protein belongs to the thioester dehydratase family. FabZ subfamily.

It localises to the cytoplasm. The catalysed reaction is a (3R)-hydroxyacyl-[ACP] = a (2E)-enoyl-[ACP] + H2O. In terms of biological role, involved in unsaturated fatty acids biosynthesis. Catalyzes the dehydration of short chain beta-hydroxyacyl-ACPs and long chain saturated and unsaturated beta-hydroxyacyl-ACPs. In Rickettsia typhi (strain ATCC VR-144 / Wilmington), this protein is 3-hydroxyacyl-[acyl-carrier-protein] dehydratase FabZ.